Here is a 335-residue protein sequence, read N- to C-terminus: tRNA N6-adenosine threonylcarbamoyltransferase (335 aa).

Histidine 111 and histidine 115 together coordinate Fe cation. Substrate-binding positions include 133–137, aspartate 166, glycine 179, and asparagine 276; that span reads LISGG. Aspartate 301 is a Fe cation binding site.

The protein belongs to the KAE1 / TsaD family. Fe(2+) is required as a cofactor.

The protein localises to the cytoplasm. It carries out the reaction L-threonylcarbamoyladenylate + adenosine(37) in tRNA = N(6)-L-threonylcarbamoyladenosine(37) in tRNA + AMP + H(+). Its function is as follows. Required for the formation of a threonylcarbamoyl group on adenosine at position 37 (t(6)A37) in tRNAs that read codons beginning with adenine. Is involved in the transfer of the threonylcarbamoyl moiety of threonylcarbamoyl-AMP (TC-AMP) to the N6 group of A37, together with TsaE and TsaB. TsaD likely plays a direct catalytic role in this reaction. In Wolbachia sp. subsp. Brugia malayi (strain TRS), this protein is tRNA N6-adenosine threonylcarbamoyltransferase.